The sequence spans 460 residues: Ammonium transporter Rh type C (460 aa).

The Cytoplasmic portion of the chain corresponds to 1–9 (MAWNTNLRW). Residues 10–30 (RLPLTCLLLQVIMVILFGVFV) form a helical membrane-spanning segment. Residues 31 to 61 (RYDPDADAHWIDERLGRNISSDMDNEFYYRY) lie on the Extracellular side of the membrane. Asn-48 is a glycosylation site (N-linked (GlcNAc...) asparagine). A helical membrane pass occupies residues 62 to 82 (PSFQDVHVMIFVGFGFLMTFL). Residues 83-86 (QRYG) lie on the Cytoplasmic side of the membrane. The chain crosses the membrane as a helical span at residues 87 to 107 (FSSVGFNFLLAAFGIQWALLM). Over 108–125 (QGWLHSFHSGYIVLGVEN) the chain is Extracellular. The helical transmembrane segment at 126–145 (LINADFCVGSVCVAFGAVLG) threads the bilayer. Topologically, residues 146-151 (KVSPVQ) are cytoplasmic. A helical membrane pass occupies residues 152–174 (LLIMTLFQVTLFSVNEFILLNLL). Residues 175–179 (EVKDA) are Extracellular-facing. The chain crosses the membrane as a helical span at residues 180 to 200 (GGSMTIHTFGAYFGLTVTWIL). Residues 201 to 219 (YRPNLYQSKERQSSVYHSD) are Cytoplasmic-facing. Residues 220 to 240 (LFAMIGTLFLWMYWPSFNSAV) traverse the membrane as a helical segment. Residues 241–251 (SHHGDAQHRAA) lie on the Extracellular side of the membrane. A helical membrane pass occupies residues 252-272 (INTYCSLAACVLTSVALSSAL). Residues 273 to 285 (HKKGKLDMVHIQN) are Cytoplasmic-facing. Residues 286–306 (ATLAGGVAVGTAAEMMLMPYG) form a helical membrane-spanning segment. Residue Ser-307 is a topological domain, extracellular. A helical membrane pass occupies residues 308 to 328 (LIVGFICGIISTLGFVYLTPF). Over 329–340 (LESRLRIQDTCG) the chain is Cytoplasmic. Residues 341–361 (IHNLHGMPGIIGGIVGAVTAA) traverse the membrane as a helical segment. Over 362-396 (SANTQQYGQKGLAHAFDIDATKTTWTASMQGSFQA) the chain is Extracellular. A helical transmembrane segment spans residues 397–417 (AGLFVSLAMALVGGLIVGVIL). The Cytoplasmic portion of the chain corresponds to 418-460 (KLPFWGQPADENCFEDAIYWEIPEDQKSLVSRSEDPTLRPTEP).

The protein belongs to the ammonium transporter (TC 2.A.49) family. Rh subfamily. Homotrimer. Post-translationally, N-glycosylated.

It is found in the cell membrane. The protein localises to the apical cell membrane. The catalysed reaction is NH4(+)(in) = NH4(+)(out). The enzyme catalyses methylamine(out) = methylamine(in). It catalyses the reaction CO2(out) = CO2(in). Its function is as follows. Ammonium transporter involved in the maintenance of acid-base homeostasis. Transports ammonium and its related derivative methylammonium across the plasma membrane of epithelial cells likely contributing to renal transepithelial ammonia transport and ammonia metabolism. Postulated to primarily mediate an electroneutral bidirectional transport of NH3 ammonia species according to a mechanism that implies interaction of an NH4(+) ion with acidic residues of the pore entry followed by dissociation of NH4(+) into NH3 and H(+). As a result NH3 transits through the central pore and is protonated on the extracellular side reforming NH4(+). May act as a CO2 channel providing for renal acid secretion. The protein is Ammonium transporter Rh type C (RHCG) of Sus scrofa (Pig).